We begin with the raw amino-acid sequence, 214 residues long: Redox-sensing transcriptional repressor Rex (214 aa).

Residues 18–57 constitute a DNA-binding region (H-T-H motif); the sequence is LYYRLVNQLHEKGIDRVNSKTISEALDIDSASIRRDFSYF. NAD(+) is bound at residue 92-97; sequence GVGNLG.

It belongs to the transcriptional regulatory Rex family. In terms of assembly, homodimer.

The protein resides in the cytoplasm. Functionally, modulates transcription in response to changes in cellular NADH/NAD(+) redox state. The sequence is that of Redox-sensing transcriptional repressor Rex from Staphylococcus carnosus (strain TM300).